The following is a 135-amino-acid chain: 6,7-dimethyl-8-ribityllumazine synthase (135 aa).

Residues F12, 44–46, and 68–70 each bind 5-amino-6-(D-ribitylamino)uracil; these read AYD and CVI. Residue 73 to 74 participates in (2S)-2-hydroxy-3-oxobutyl phosphate binding; that stretch reads AT. The active-site Proton donor is H76. Residue L101 participates in 5-amino-6-(D-ribitylamino)uracil binding. Residue R116 participates in (2S)-2-hydroxy-3-oxobutyl phosphate binding.

The protein belongs to the DMRL synthase family.

The catalysed reaction is (2S)-2-hydroxy-3-oxobutyl phosphate + 5-amino-6-(D-ribitylamino)uracil = 6,7-dimethyl-8-(1-D-ribityl)lumazine + phosphate + 2 H2O + H(+). It functions in the pathway cofactor biosynthesis; riboflavin biosynthesis; riboflavin from 2-hydroxy-3-oxobutyl phosphate and 5-amino-6-(D-ribitylamino)uracil: step 1/2. Its function is as follows. Catalyzes the formation of 6,7-dimethyl-8-ribityllumazine by condensation of 5-amino-6-(D-ribitylamino)uracil with 3,4-dihydroxy-2-butanone 4-phosphate. This is the penultimate step in the biosynthesis of riboflavin. The protein is 6,7-dimethyl-8-ribityllumazine synthase of Methanoculleus marisnigri (strain ATCC 35101 / DSM 1498 / JR1).